The chain runs to 458 residues: Argininosuccinate lyase (458 aa).

It belongs to the lyase 1 family. Argininosuccinate lyase subfamily.

Its subcellular location is the cytoplasm. It carries out the reaction 2-(N(omega)-L-arginino)succinate = fumarate + L-arginine. It participates in amino-acid biosynthesis; L-arginine biosynthesis; L-arginine from L-ornithine and carbamoyl phosphate: step 3/3. This is Argininosuccinate lyase from Actinobacillus pleuropneumoniae serotype 5b (strain L20).